The following is a 183-amino-acid chain: ATP synthase subunit b, chloroplastic (183 aa).

Residues 27–49 (LATNLINLTVVVGVLIFFGKGVL) form a helical membrane-spanning segment.

This sequence belongs to the ATPase B chain family. F-type ATPases have 2 components, F(1) - the catalytic core - and F(0) - the membrane proton channel. F(1) has five subunits: alpha(3), beta(3), gamma(1), delta(1), epsilon(1). F(0) has four main subunits: a(1), b(1), b'(1) and c(10-14). The alpha and beta chains form an alternating ring which encloses part of the gamma chain. F(1) is attached to F(0) by a central stalk formed by the gamma and epsilon chains, while a peripheral stalk is formed by the delta, b and b' chains.

The protein localises to the plastid. It localises to the chloroplast thylakoid membrane. Its function is as follows. F(1)F(0) ATP synthase produces ATP from ADP in the presence of a proton or sodium gradient. F-type ATPases consist of two structural domains, F(1) containing the extramembraneous catalytic core and F(0) containing the membrane proton channel, linked together by a central stalk and a peripheral stalk. During catalysis, ATP synthesis in the catalytic domain of F(1) is coupled via a rotary mechanism of the central stalk subunits to proton translocation. Component of the F(0) channel, it forms part of the peripheral stalk, linking F(1) to F(0). The chain is ATP synthase subunit b, chloroplastic from Lolium perenne (Perennial ryegrass).